Here is a 338-residue protein sequence, read N- to C-terminus: Anthranilate phosphoribosyltransferase (338 aa).

Residues Gly81, 84–85 (GD), Thr89, 91–94 (NIST), 109–117 (KHGNRGVSS), and Ser121 contribute to the 5-phospho-alpha-D-ribose 1-diphosphate site. Position 81 (Gly81) interacts with anthranilate. Ser93 is a binding site for Mg(2+). Asn112 serves as a coordination point for anthranilate. An anthranilate-binding site is contributed by Arg167. Residues Asp225 and Glu226 each contribute to the Mg(2+) site.

This sequence belongs to the anthranilate phosphoribosyltransferase family. As to quaternary structure, homodimer. Mg(2+) is required as a cofactor.

It catalyses the reaction N-(5-phospho-beta-D-ribosyl)anthranilate + diphosphate = 5-phospho-alpha-D-ribose 1-diphosphate + anthranilate. It participates in amino-acid biosynthesis; L-tryptophan biosynthesis; L-tryptophan from chorismate: step 2/5. In terms of biological role, catalyzes the transfer of the phosphoribosyl group of 5-phosphorylribose-1-pyrophosphate (PRPP) to anthranilate to yield N-(5'-phosphoribosyl)-anthranilate (PRA). This is Anthranilate phosphoribosyltransferase from Methanoculleus marisnigri (strain ATCC 35101 / DSM 1498 / JR1).